Reading from the N-terminus, the 40-residue chain is MKVRNSLRSLKNKPGAQVVRRRGKVYVINKKEPRFKARQG.

It belongs to the bacterial ribosomal protein bL36 family.

The sequence is that of Large ribosomal subunit protein bL36 from Corynebacterium glutamicum (strain R).